The following is a 430-amino-acid chain: Histidinol dehydrogenase (430 aa).

Positions 124, 185, and 208 each coordinate NAD(+). Substrate is bound by residues Ser-233, Gln-255, and His-258. Zn(2+) contacts are provided by Gln-255 and His-258. Active-site proton acceptor residues include Glu-324 and His-325. The substrate site is built by His-325, Asp-358, Glu-412, and His-418. A Zn(2+)-binding site is contributed by Asp-358. Position 418 (His-418) interacts with Zn(2+).

Belongs to the histidinol dehydrogenase family. It depends on Zn(2+) as a cofactor.

It catalyses the reaction L-histidinol + 2 NAD(+) + H2O = L-histidine + 2 NADH + 3 H(+). Its pathway is amino-acid biosynthesis; L-histidine biosynthesis; L-histidine from 5-phospho-alpha-D-ribose 1-diphosphate: step 9/9. Functionally, catalyzes the sequential NAD-dependent oxidations of L-histidinol to L-histidinaldehyde and then to L-histidine. This Leptospira biflexa serovar Patoc (strain Patoc 1 / Ames) protein is Histidinol dehydrogenase.